The primary structure comprises 223 residues: Rho-related protein racE (223 aa).

18–25 lines the GTP pocket; that stretch reads GDGAVGKT. An Effector region motif is present at residues 40-48; that stretch reads YVPTVFENY. GTP-binding positions include 65–69 and 123–126; these read DTAGQ and TKID. The tract at residues 187–223 is disordered; the sequence is GMDKKSQDGSSSASGVPSGDKPTKGKAGKKKSGCIIL. Positions 210–223 are enriched in basic residues; it reads KGKAGKKKSGCIIL. At Cys-220 the chain carries Cysteine methyl ester. Cys-220 is lipidated: S-geranylgeranyl cysteine. Positions 221-223 are cleaved as a propeptide — removed in mature form; sequence IIL.

Belongs to the small GTPase superfamily. Rho family. As to quaternary structure, interacts with rgaA.

It is found in the cell membrane. In terms of biological role, specifically required for cytokinesis. The polypeptide is Rho-related protein racE (racE) (Dictyostelium discoideum (Social amoeba)).